We begin with the raw amino-acid sequence, 380 residues long: Probable dual-specificity RNA methyltransferase RlmN (380 aa).

Residue Glu112 is the Proton acceptor of the active site. Positions 118 to 358 (YPDRVTACLS…TTVRDTRGRE (241 aa)) constitute a Radical SAM core domain. Residues Cys125 and Cys363 are joined by a disulfide bond. [4Fe-4S] cluster contacts are provided by Cys132, Cys136, and Cys139. Residues 187–188 (GE), Ser221, 244–246 (SLH), and Asn320 each bind S-adenosyl-L-methionine. The active-site S-methylcysteine intermediate is the Cys363.

It belongs to the radical SAM superfamily. RlmN family. [4Fe-4S] cluster serves as cofactor.

The protein resides in the cytoplasm. It catalyses the reaction adenosine(2503) in 23S rRNA + 2 reduced [2Fe-2S]-[ferredoxin] + 2 S-adenosyl-L-methionine = 2-methyladenosine(2503) in 23S rRNA + 5'-deoxyadenosine + L-methionine + 2 oxidized [2Fe-2S]-[ferredoxin] + S-adenosyl-L-homocysteine. The catalysed reaction is adenosine(37) in tRNA + 2 reduced [2Fe-2S]-[ferredoxin] + 2 S-adenosyl-L-methionine = 2-methyladenosine(37) in tRNA + 5'-deoxyadenosine + L-methionine + 2 oxidized [2Fe-2S]-[ferredoxin] + S-adenosyl-L-homocysteine. Its function is as follows. Specifically methylates position 2 of adenine 2503 in 23S rRNA and position 2 of adenine 37 in tRNAs. The protein is Probable dual-specificity RNA methyltransferase RlmN of Salinispora arenicola (strain CNS-205).